Consider the following 384-residue polypeptide: GDSL esterase/lipase At1g28670 (384 aa).

The N-terminal stretch at 1-24 (MASSLKKLISSFLLVLYSTTIIVA) is a signal peptide. Serine 42 functions as the Nucleophile in the catalytic mechanism. Asparagine 105, asparagine 138, and asparagine 321 each carry an N-linked (GlcNAc...) asparagine glycan. Catalysis depends on residues aspartate 346 and histidine 349.

Belongs to the 'GDSL' lipolytic enzyme family.

Its subcellular location is the secreted. This is GDSL esterase/lipase At1g28670 from Arabidopsis thaliana (Mouse-ear cress).